The following is a 430-amino-acid chain: Adenylosuccinate synthetase (430 aa).

GTP contacts are provided by residues 12-18 (GDEGKGK) and 40-42 (GHT). The active-site Proton acceptor is D13. Mg(2+)-binding residues include D13 and G40. IMP-binding positions include 13–16 (DEGK), 38–41 (NAGH), T130, R144, Q224, T239, and R303. H41 (proton donor) is an active-site residue. 299–305 (TVTSRKR) provides a ligand contact to substrate. GTP-binding positions include R305, 331 to 333 (KLD), and 413 to 415 (STS).

The protein belongs to the adenylosuccinate synthetase family. As to quaternary structure, homodimer. The cofactor is Mg(2+).

The protein resides in the cytoplasm. It catalyses the reaction IMP + L-aspartate + GTP = N(6)-(1,2-dicarboxyethyl)-AMP + GDP + phosphate + 2 H(+). It participates in purine metabolism; AMP biosynthesis via de novo pathway; AMP from IMP: step 1/2. Its function is as follows. Plays an important role in the de novo pathway of purine nucleotide biosynthesis. Catalyzes the first committed step in the biosynthesis of AMP from IMP. The protein is Adenylosuccinate synthetase of Pelagibacter ubique (strain HTCC1062).